The sequence spans 457 residues: tRNA-2-methylthio-N(6)-dimethylallyladenosine synthase (457 aa).

One can recognise an MTTase N-terminal domain in the interval 18 to 133 (KKLFIETYGC…LPELIASVEA (116 aa)). Positions 27, 63, 97, 171, 175, and 178 each coordinate [4Fe-4S] cluster. The 234-residue stretch at 157 to 390 (CGNHISGFVS…IALQNRLSAE (234 aa)) folds into the Radical SAM core domain. Residues 393–456 (NRCIGKTYEV…SATLKGEEVF (64 aa)) enclose the TRAM domain.

This sequence belongs to the methylthiotransferase family. MiaB subfamily. In terms of assembly, monomer. Requires [4Fe-4S] cluster as cofactor.

The protein localises to the cytoplasm. It carries out the reaction N(6)-dimethylallyladenosine(37) in tRNA + (sulfur carrier)-SH + AH2 + 2 S-adenosyl-L-methionine = 2-methylsulfanyl-N(6)-dimethylallyladenosine(37) in tRNA + (sulfur carrier)-H + 5'-deoxyadenosine + L-methionine + A + S-adenosyl-L-homocysteine + 2 H(+). Catalyzes the methylthiolation of N6-(dimethylallyl)adenosine (i(6)A), leading to the formation of 2-methylthio-N6-(dimethylallyl)adenosine (ms(2)i(6)A) at position 37 in tRNAs that read codons beginning with uridine. The sequence is that of tRNA-2-methylthio-N(6)-dimethylallyladenosine synthase from Bacteroides fragilis (strain ATCC 25285 / DSM 2151 / CCUG 4856 / JCM 11019 / LMG 10263 / NCTC 9343 / Onslow / VPI 2553 / EN-2).